A 194-amino-acid polypeptide reads, in one-letter code: Large ribosomal subunit protein eL15 (194 aa).

Residues 160-194 (RGLTSAGKKGRGLMYKGKGTEKVRPSVRANSKKAK) are disordered.

This sequence belongs to the eukaryotic ribosomal protein eL15 family.

This is Large ribosomal subunit protein eL15 from Methanococcus maripaludis (strain C7 / ATCC BAA-1331).